Consider the following 986-residue polypeptide: Anoctamin-1 (986 aa).

Residues 1–333 (MRVNEKYSTL…FGEKIGLYFA (333 aa)) are Cytoplasmic-facing. The tract at residues 79–121 (LVRRVQHSDTPSGARSVKQDHPLPGKGASLDAGSGEPPMDYHE) is disordered. S107 and S196 each carry phosphoserine. Residues 334–354 (WLGVYTQMLIPASIVGIIVFL) form a helical membrane-spanning segment. At 355–406 (YGCATMDENIPSMEMCDQRHNITMCPLCDKTCSYWKMSSACATARASHLFDN) the chain is on the extracellular side. Disulfide bonds link C370–C395, C379–C862, C382–C386, and C651–C656. Residues 407–427 (PATVFFSVFMALWAATFMEHW) traverse the membrane as a helical segment. E425 contacts Ca(2+). At 428 to 519 (KRKQMRLNYR…RDRFPAYLTN (92 aa)) the chain is on the cytoplasmic side. The helical transmembrane segment at 520-540 (LVSIIFMIAVTFAIVLGVIIY) threads the bilayer. Topologically, residues 541–568 (RISMAAALAMNSSPSVRSNIRVTVTATA) are extracellular. Residues 569–589 (VIINLVVIILLDEVYGCIARW) traverse the membrane as a helical segment. The Cytoplasmic segment spans residues 590–607 (LTKIEVPKTEKSFEERLI). A helical transmembrane segment spans residues 608 to 628 (FKAFLLKFVNSYTPIFYVAFF). At 629 to 657 (KGRFVGRPGDYVYIFRSFRMEECAPGGCL) the chain is on the extracellular side. Residues 658–678 (MELCIQLSIIMLGKQLIQNNL) form a helical membrane-spanning segment. Ca(2+) is bound by residues N677, E680, E728, E731, E760, and D764. At 679-725 (FEIGIPKMKKLIRYLKLKQQSPPDHEECVKRKQRYEVDYNLEPFAGL) the chain is on the cytoplasmic side. The next 2 membrane-spanning stretches (helical) occupy residues 726-746 (TPEY…VASF) and 747-767 (PLAP…DAKK). The Cytoplasmic segment spans residues 768–784 (FVTELRRPVAVRAKDIG). The helical transmembrane segment at 785-805 (IWYNILRGIGKLAVIINAFVI) threads the bilayer. Over 806–892 (SFTSDFIPRL…FWAVLAARLA (87 aa)) the chain is Extracellular. Residue N832 is glycosylated (N-linked (GlcNAc...) asparagine). A helical membrane pass occupies residues 893–913 (FVIVFQNLVMFMSDFVDWVIP). Residues D909 and D914 each coordinate Ca(2+). Residues 914-986 (DIPKDISQQI…PSHAYHGGVL (73 aa)) lie on the Cytoplasmic side of the membrane. A compositionally biased stretch (basic and acidic residues) spans 951-960 (KERQKDEPPC). Residues 951–986 (KERQKDEPPCNHHNTKACPDSLGSPAPSHAYHGGVL) form a disordered region.

Belongs to the anoctamin family. As to quaternary structure, homodimer. Interacts with CFTR. Interacts with TRPV4. Expressed in nasal epithelial cells (at protein level). In the kidney, expressed in the collecting duct (at protein level). Broadly expressed with higher levels in liver, skeletal muscle and gastrointestinal muscles. Expressed in eccrine sweat glands.

It is found in the apical cell membrane. Its subcellular location is the presynapse. The enzyme catalyses chloride(in) = chloride(out). Its activity is regulated as follows. ATP and calmodulin are essential for its activation. Channel activity is inhibited by CFTR protein and by chloride inhibitors such as niflumic acid (NFA) and 4,4'-diisothiocyanatostilbene-2,2'-disulfonic acid (DIDS). Activated by heat with activation seen at temperatures above 44 degrees Celsius. Activated by BDNF in radial glial cells. Calcium-activated chloride channel (CaCC). Plays a role in transepithelial anion transport and smooth muscle contraction. Required for the normal functioning of the interstitial cells of Cajal (ICCs) which generate electrical pacemaker activity in gastrointestinal smooth muscles. Acts as a major contributor to basal and stimulated chloride conductance in airway epithelial cells and plays an important role in tracheal cartilage development. Required for CFTR activation by enhancing endoplasmic reticulum Ca(2+) store release and is also required for CFTR membrane expression. Required for basal and ATP-dependent mucus secretion in airways and intestine, probably by controlling exocytosis of mucus-filled granules by providing Ca(2+) to an apical signaling compartment. Contributes to airway mucus expression induced by interleukins IL3 and IL8 and by the asthma-associated protein CLCA1 and is required for expression of mucin MUC5AC. However, was shown in another study not to be required for MUC5AC expression. Plays a role in the propagation of Ca(2+) waves in Kolliker's organ in the cochlea and contributes to the refinement of auditory brainstem circuitries prior to hearing onset. In vomeronasal sensory neurons, modulates spontaneous firing patterns in the absence of stimuli as well as the firing pattern of pheromone-evoked activity. Responsible for calcium-activated chloride channel activity in type I taste cells of the vallate papillae. Acts as a heat sensor in nociceptive neurons. In dorsal root ganglion neurons, plays a role in mediating non-histaminergic Mas-related G-protein coupled receptor (MRGPR)-dependent itching, acting as a downstream effector of MRGPRs. In the developing brain, required for the Ca(2+)-dependent process extension of radial glial cells. Functionally, calcium-activated chloride channel (CaCC). Contributes to calcium-activated chloride secretion in human sweat gland epithelial cells. Shows increased basal chloride permeability and decreased Ca(2+)-induced chloride permeability. Its function is as follows. Calcium-activated chloride channel (CaCC). Shows increased sensitivity to intracellular Ca(2+). This chain is Anoctamin-1 (ANO1), found in Homo sapiens (Human).